Here is a 110-residue protein sequence, read N- to C-terminus: uncharacterized protein (110 aa).

A signal peptide spans 1–26 (MIRNVLLAFMICSGMTLLGGCSSVMS). The segment at 87-110 (RVEKSEANAQATNAVIPPARMPDN) is disordered.

To E.coli YceK.

This is an uncharacterized protein from Escherichia coli (strain K12).